The sequence spans 353 residues: Neutral protease 2 homolog AO090001000135 (353 aa).

The N-terminal stretch at 1 to 19 (MRFISVSSLLLALAPALNA) is a signal peptide. The propeptide occupies 20–176 (VPVEVAGSAQ…TQAVKILERR (157 aa)). 2 cysteine pairs are disulfide-bonded: C182-C254 and C261-C279. H304 lines the Zn(2+) pocket. E305 is a catalytic residue. Zn(2+)-binding residues include H308 and D319.

It belongs to the peptidase M35 family. The cofactor is Zn(2+).

Its subcellular location is the secreted. It carries out the reaction Preferential cleavage of bonds with hydrophobic residues in P1'. Also 3-Asn-|-Gln-4 and 8-Gly-|-Ser-9 bonds in insulin B chain.. Secreted metalloproteinase that allows assimilation of proteinaceous substrates. Shows high activities on basic nuclear substrates such as histone and protamine. This Aspergillus oryzae (strain ATCC 42149 / RIB 40) (Yellow koji mold) protein is Neutral protease 2 homolog AO090001000135.